Here is a 175-residue protein sequence, read N- to C-terminus: Crossover junction endodeoxyribonuclease RuvC (175 aa).

Catalysis depends on residues Asp16, Glu76, and Asp148. The Mg(2+) site is built by Asp16, Glu76, and Asp148.

The protein belongs to the RuvC family. As to quaternary structure, homodimer which binds Holliday junction (HJ) DNA. The HJ becomes 2-fold symmetrical on binding to RuvC with unstacked arms; it has a different conformation from HJ DNA in complex with RuvA. In the full resolvosome a probable DNA-RuvA(4)-RuvB(12)-RuvC(2) complex forms which resolves the HJ. The cofactor is Mg(2+).

The protein resides in the cytoplasm. The catalysed reaction is Endonucleolytic cleavage at a junction such as a reciprocal single-stranded crossover between two homologous DNA duplexes (Holliday junction).. In terms of biological role, the RuvA-RuvB-RuvC complex processes Holliday junction (HJ) DNA during genetic recombination and DNA repair. Endonuclease that resolves HJ intermediates. Cleaves cruciform DNA by making single-stranded nicks across the HJ at symmetrical positions within the homologous arms, yielding a 5'-phosphate and a 3'-hydroxyl group; requires a central core of homology in the junction. The consensus cleavage sequence is 5'-(A/T)TT(C/G)-3'. Cleavage occurs on the 3'-side of the TT dinucleotide at the point of strand exchange. HJ branch migration catalyzed by RuvA-RuvB allows RuvC to scan DNA until it finds its consensus sequence, where it cleaves and resolves the cruciform DNA. The polypeptide is Crossover junction endodeoxyribonuclease RuvC (Rhodopseudomonas palustris (strain BisB18)).